The chain runs to 451 residues: Bifunctional protein GlmU (451 aa).

Positions 1–225 (MSLAVVILAA…EFEIQGVNDR (225 aa)) are pyrophosphorylase. Residues 8–11 (LAAG), Lys-22, Gln-73, 78–79 (GT), 99–101 (YGD), Gly-135, Glu-150, Asn-165, and Asn-223 each bind UDP-N-acetyl-alpha-D-glucosamine. Asp-101 provides a ligand contact to Mg(2+). Asn-223 is a Mg(2+) binding site. The tract at residues 226–246 (IQLAQLEREWQKHIAEVIMSK) is linker. The N-acetyltransferase stretch occupies residues 247 to 451 (GVSVADPSRI…IDTWQRPVKK (205 aa)). UDP-N-acetyl-alpha-D-glucosamine contacts are provided by Arg-329 and Lys-347. Residue His-359 is the Proton acceptor of the active site. Residues Tyr-362 and Asn-373 each contribute to the UDP-N-acetyl-alpha-D-glucosamine site. Acetyl-CoA-binding positions include Ala-376, 382–383 (NY), Ser-401, Ala-419, and Arg-436.

This sequence in the N-terminal section; belongs to the N-acetylglucosamine-1-phosphate uridyltransferase family. In the C-terminal section; belongs to the transferase hexapeptide repeat family. As to quaternary structure, homotrimer. Mg(2+) serves as cofactor.

The protein resides in the cytoplasm. The enzyme catalyses alpha-D-glucosamine 1-phosphate + acetyl-CoA = N-acetyl-alpha-D-glucosamine 1-phosphate + CoA + H(+). The catalysed reaction is N-acetyl-alpha-D-glucosamine 1-phosphate + UTP + H(+) = UDP-N-acetyl-alpha-D-glucosamine + diphosphate. Its pathway is nucleotide-sugar biosynthesis; UDP-N-acetyl-alpha-D-glucosamine biosynthesis; N-acetyl-alpha-D-glucosamine 1-phosphate from alpha-D-glucosamine 6-phosphate (route II): step 2/2. The protein operates within nucleotide-sugar biosynthesis; UDP-N-acetyl-alpha-D-glucosamine biosynthesis; UDP-N-acetyl-alpha-D-glucosamine from N-acetyl-alpha-D-glucosamine 1-phosphate: step 1/1. It functions in the pathway bacterial outer membrane biogenesis; LPS lipid A biosynthesis. In terms of biological role, catalyzes the last two sequential reactions in the de novo biosynthetic pathway for UDP-N-acetylglucosamine (UDP-GlcNAc). The C-terminal domain catalyzes the transfer of acetyl group from acetyl coenzyme A to glucosamine-1-phosphate (GlcN-1-P) to produce N-acetylglucosamine-1-phosphate (GlcNAc-1-P), which is converted into UDP-GlcNAc by the transfer of uridine 5-monophosphate (from uridine 5-triphosphate), a reaction catalyzed by the N-terminal domain. This chain is Bifunctional protein GlmU, found in Francisella philomiragia subsp. philomiragia (strain ATCC 25017 / CCUG 19701 / FSC 153 / O#319-036).